Here is a 137-residue protein sequence, read N- to C-terminus: Bombinin-like peptides 1 (137 aa).

A signal peptide spans 1 to 18 (MNFKYIVAVSILIASAYA). Asn70 is modified (asparagine amide). The disordered stretch occupies residues 91–112 (LDSFEHPEEASEKETRGFNQEE). Ile118 is subject to D-allo-isoleucine. Ile136 carries the post-translational modification Isoleucine amide.

Belongs to the bombinin family. Expressed by the skin glands.

It localises to the secreted. Has antimicrobial activity, but no hemolytic activity. Preliminary evidence indicates that this peptide does not lyse and thus kill the bacteria by its antimicrobial activity. In terms of biological role, bombinin H has antibacterial and hemolytic activity. The chain is Bombinin-like peptides 1 from Bombina variegata (Yellow-bellied toad).